A 142-amino-acid chain; its full sequence is Neuritin (142 aa).

Residues 1-27 (MGLKLNGRYISLILAVQIAYLVQAVRA) form the signal peptide. Glycine 116 carries the GPI-anchor amidated glycine lipid modification. Residues 117-142 (AAGSLLPAFPVLLVSLSAALATWLSF) constitute a propeptide, removed in mature form.

It belongs to the neuritin family. As to quaternary structure, component of the outer core of AMPAR complex. AMPAR complex consists of an inner core made of 4 pore-forming GluA/GRIA proteins (GRIA1, GRIA2, GRIA3 and GRIA4) and 4 major auxiliary subunits arranged in a twofold symmetry. One of the two pairs of distinct binding sites is occupied either by CNIH2, CNIH3 or CACNG2, CACNG3. The other harbors CACNG2, CACNG3, CACNG4, CACNG8 or GSG1L. This inner core of AMPAR complex is complemented by outer core constituents binding directly to the GluA/GRIA proteins at sites distinct from the interaction sites of the inner core constituents. Outer core constituents include at least PRRT1, PRRT2, CKAMP44/SHISA9, FRRS1L and NRN1. The proteins of the inner and outer core serve as a platform for other, more peripherally associated AMPAR constituents. Alone or in combination, these auxiliary subunits control the gating and pharmacology of the AMPAR complex and profoundly impact their biogenesis and protein processing.

Its subcellular location is the cell membrane. It is found in the synapse. Promotes neurite outgrowth and especially branching of neuritic processes in primary hippocampal and cortical cells. This Homo sapiens (Human) protein is Neuritin (NRN1).